Here is a 538-residue protein sequence, read N- to C-terminus: Putative cysteine ligase BshC (538 aa).

Residues 460 to 484 (KINEQIELLERMLKRNVEKKHEVEL) adopt a coiled-coil conformation.

Belongs to the BshC family.

Its function is as follows. Involved in bacillithiol (BSH) biosynthesis. May catalyze the last step of the pathway, the addition of cysteine to glucosamine malate (GlcN-Mal) to generate BSH. This is Putative cysteine ligase BshC from Bacillus cereus (strain AH187).